The primary structure comprises 120 residues: Flagellar protein FliT (120 aa).

The required for homodimerization stretch occupies residues 1 to 50 (MNDFISSLNNWQALYALSNTMLSLANSGQWDELIEQEVKYVTLVEAIARN). The fliD binding stretch occupies residues 59 to 97 (FQEKARELLTKVLANEAALKIKLQARMEELRVLIEQNGN).

This sequence belongs to the FliT family. As to quaternary structure, homodimer. Interacts with FliD and FlhC.

It is found in the cytoplasm. It localises to the cytosol. Its function is as follows. Dual-function protein that regulates the transcription of class 2 flagellar operons and that also acts as an export chaperone for the filament-capping protein FliD. As a transcriptional regulator, acts as an anti-FlhDC factor; it directly binds FlhC, thus inhibiting the binding of the FlhC/FlhD complex to class 2 promoters, resulting in decreased expression of class 2 flagellar operons. As a chaperone, effects FliD transition to the membrane by preventing its premature polymerization, and by directing it to the export apparatus. This chain is Flagellar protein FliT, found in Cronobacter sakazakii (strain ATCC BAA-894) (Enterobacter sakazakii).